A 143-amino-acid polypeptide reads, in one-letter code: MFIGEYNHAVDTKGRVSIPAKFREELGEHFILTKGLDNCLFIYSSDEWGILENKLKQLPMTNKDARAFVRFFFSGASECELDSQGRIRIPANLREHALLEKEAIIIGVGTRVEIWSNVEWEKYNSDDNLSYDEIANKMAELGI.

2 SpoVT-AbrB domains span residues 5-47 and 76-119; these read EYNH…SSDE and ASEC…SNVE.

It belongs to the MraZ family. Forms oligomers.

It is found in the cytoplasm. The protein localises to the nucleoid. The protein is Transcriptional regulator MraZ of Alkaliphilus oremlandii (strain OhILAs) (Clostridium oremlandii (strain OhILAs)).